Reading from the N-terminus, the 330-residue chain is Aspartate--ammonia ligase (330 aa).

The protein belongs to the class-II aminoacyl-tRNA synthetase family. AsnA subfamily.

Its subcellular location is the cytoplasm. It carries out the reaction L-aspartate + NH4(+) + ATP = L-asparagine + AMP + diphosphate + H(+). It participates in amino-acid biosynthesis; L-asparagine biosynthesis; L-asparagine from L-aspartate (ammonia route): step 1/1. This is Aspartate--ammonia ligase from Escherichia coli O81 (strain ED1a).